The following is a 344-amino-acid chain: Eukaryotic translation initiation factor 2 subunit alpha homolog (344 aa).

Positions 21–92 constitute an S1 motif domain; sequence DMAVMIQVKN…EKGYIDLSKR (72 aa). A Phosphoserine; by GCN2 modification is found at S56. The disordered stretch occupies residues 312–344; that stretch reads DNEEMSGDEDSGDEEEDTGMGEVDLDAGAGIIE. Acidic residues predominate over residues 314–336; sequence EEMSGDEDSGDEEEDTGMGEVDL.

This sequence belongs to the eIF-2-alpha family. Heterotrimer composed of an alpha, a beta and a gamma chain. Post-translationally, phosphorylated at Ser-56 by GCN2.

In terms of biological role, functions in the early steps of protein synthesis by forming a ternary complex with GTP and initiator tRNA. This complex binds to a 40S ribosomal subunit, followed by mRNA binding to form a 43S pre-initiation complex. Junction of the 60S ribosomal subunit to form the 80S initiation complex is preceded by hydrolysis of the GTP bound to eIF-2 and release of an eIF-2-GDP binary complex. In order for eIF-2 to recycle and catalyze another round of initiation, the GDP bound to eIF-2 must exchange with GTP by way of a reaction catalyzed by eIF-2B. The protein is Eukaryotic translation initiation factor 2 subunit alpha homolog of Arabidopsis thaliana (Mouse-ear cress).